A 519-amino-acid polypeptide reads, in one-letter code: Probable U3 small nucleolar RNA-associated protein 18 (519 aa).

9 WD repeats span residues 26–66 (DKEN…MFDT), 71–111 (GAKD…RLMI), 216–254 (SHSG…NPLV), 259–298 (LRSS…VQKV), 306–345 (NFQP…FATS), 347–386 (KIEG…VVRR), 390–429 (QDGV…ADAA), 438–479 (NITF…VFRN), and 485–519 (TPLG…AHYD).

This sequence belongs to the WD repeat UTP18 family. Component of the ribosomal small subunit (SSU) processome.

It is found in the nucleus. The protein resides in the nucleolus. Its function is as follows. Involved in nucleolar processing of pre-18S ribosomal RNA. The chain is Probable U3 small nucleolar RNA-associated protein 18 from Schizosaccharomyces pombe (strain 972 / ATCC 24843) (Fission yeast).